Consider the following 902-residue polypeptide: 3'-5' exonuclease DinG (902 aa).

Positions 8–161 (VVDLETTGNQ…DEDATTTAKL (154 aa)) constitute an Exonuclease domain. Residues 241-496 (KNVTQSLNLT…KAVDKLEQQR (256 aa)) enclose the Helicase ATP-binding domain. 276-283 (APLGSGKS) lines the ATP pocket. The short motif at 448-451 (DEAH) is the DEAH box element. The Helicase C-terminal domain occupies 714-883 (YIVEYITVTQ…HFKQRKGNIK (170 aa)).

This sequence belongs to the helicase family. DinG subfamily. Type 2 sub-subfamily.

Functionally, 3'-5' exonuclease. In Staphylococcus epidermidis (strain ATCC 35984 / DSM 28319 / BCRC 17069 / CCUG 31568 / BM 3577 / RP62A), this protein is 3'-5' exonuclease DinG.